The chain runs to 801 residues: Na(+)/H(+) antiporter subunit A1 (801 aa).

The next 19 membrane-spanning stretches (helical) occupy residues 1–21 (MSLLHIAVILPLIFVLIIPIL), 28–48 (IHLGWFVLPVPIVIFIYMLTL), 79–99 (LGLLFSLLISGIGSLVVLYSI), 117–137 (LFMGAMLGVVLSDNVIILYLF), 166–186 (LIITVFGGLSLLGGIILLAIP), 206–226 (PFFIFAMILIMIGAFTKSAQF), 265–285 (IFAASQGWIWTVTLVGLITLF), 300–320 (ILAFSTVSQLGMIMAMLGIGA), 337–357 (FTAAIFHLINHATFKGALFMI), 373–393 (LGGLLTIMPISFTITVITALS), 427–447 (LGYLFPIIGIVGSVFTFVYSI), 472–492 (ILMLLSPAILATLVIVFGLFP), 522–542 (GLTPAFLSTLVIYILGILLIV), 591–611 (LVIIFGALILLTFVTVFSVPF), 623–643 (IFEVCIVILLLSAAFLILFAK), 646–666 (LFNIIMLSAVGYAVSVLFIFF), 671–691 (LALTQFVVESISTALFLLCFY), 707–727 (LTNALIAGGVGLSVIIIGLIA), and 764–784 (MDTLFESSVLGIAGLAVYTMI).

The protein belongs to the CPA3 antiporters (TC 2.A.63) subunit A family. May form a heterooligomeric complex that consists of seven subunits: mnhA1, mnhB1, mnhC1, mnhD1, mnhE1, mnhF1 and mnhG1.

The protein localises to the cell membrane. Functionally, mnh complex is a Na(+)/H(+) antiporter involved in Na(+) excretion. This is Na(+)/H(+) antiporter subunit A1 (mnhA1) from Staphylococcus aureus (strain bovine RF122 / ET3-1).